The following is a 204-amino-acid chain: MLHSLFRLTLLFYALFNALGSLPVFIALLKNFSFKKQQHIILRESIFALLLLLLFVTFGRGFFRLLGIILPAFQFTGSLLLGSIAIDMMKALPPQTETLERDKDEPIFFPLAFPVITGPAMITSTLGHMEEGIFPKKIVLGAIVLAWLFSLITLLLSSSINRLFGQMGLLALERLFGISLALMAGNLMLKALSTAFNIGYYVTP.

Helical transmembrane passes span 9 to 29 (TLLF…IALL), 39 to 59 (HIIL…VTFG), 66 to 86 (LGII…SIAI), 107 to 127 (IFFP…STLG), 138 to 158 (IVLG…LLSS), and 176 to 196 (FGIS…STAF).

The protein belongs to the UPF0056 (MarC) family.

It is found in the cell membrane. The protein is UPF0056 membrane protein CT_852 of Chlamydia trachomatis serovar D (strain ATCC VR-885 / DSM 19411 / UW-3/Cx).